The primary structure comprises 542 residues: Sialate O-acetylesterase (542 aa).

Positions 1–23 (MVSPRPVGLMLLLIIARVSRGAG) are cleaved as a signal peptide. Residues N107, N138, N188, N294, N357, N428, N449, and N463 are each glycosylated (N-linked (GlcNAc...) asparagine).

As to quaternary structure, disulfide-linked heterodimer of a small subunit and a large subunit. The two subunits are derived from a single precursor by proteolytic cleavage. Post-translationally, glycosylated. In terms of tissue distribution, widely expressed.

The protein localises to the lysosome. It catalyses the reaction N-acetyl-9-O-acetylneuraminate + H2O = N-acetylneuraminate + acetate + H(+). It carries out the reaction an Ac-O-9-sialoglycoconjugate + H2O = a sialoglycoconjugate + acetate + H(+). Inhibited by diisopropyl fluorophosphate and diethyl-P-nitrophenyl phosphate. Its function is as follows. Catalyzes the removal of O-acetyl ester groups from position 9 of the free diacetylated sialate N-acetyl-9-O-acetylneuraminate (Neu5,9Ac2) in the cytosol and of the diacetylated sialate residues of sialylglycoconjugates in the lysosomes. Together with the sialate-O-acetyltransferase they regulate the balance of acetylated sialoglycoconjugates, key players in various processes such as cell-cell interactions, host-pathogen recognition, and tumor antigenicity. This is Sialate O-acetylesterase (Siae) from Rattus norvegicus (Rat).